The chain runs to 519 residues: T-complex protein 1 subunit gamma (519 aa).

Belongs to the TCP-1 chaperonin family. As to quaternary structure, component of the T-complex protein 1 (TCP1) complex.

The protein localises to the cytoplasm. In terms of biological role, molecular chaperone; assists the folding of proteins upon ATP hydrolysis. The sequence is that of T-complex protein 1 subunit gamma (CCT3) from Encephalitozoon cuniculi (strain GB-M1) (Microsporidian parasite).